Consider the following 332-residue polypeptide: Tetraacyldisaccharide 4'-kinase (332 aa).

53-60 contacts ATP; sequence SVGGNGKT.

Belongs to the LpxK family.

The enzyme catalyses a lipid A disaccharide + ATP = a lipid IVA + ADP + H(+). The protein operates within glycolipid biosynthesis; lipid IV(A) biosynthesis; lipid IV(A) from (3R)-3-hydroxytetradecanoyl-[acyl-carrier-protein] and UDP-N-acetyl-alpha-D-glucosamine: step 6/6. Functionally, transfers the gamma-phosphate of ATP to the 4'-position of a tetraacyldisaccharide 1-phosphate intermediate (termed DS-1-P) to form tetraacyldisaccharide 1,4'-bis-phosphate (lipid IVA). This is Tetraacyldisaccharide 4'-kinase from Haemophilus influenzae (strain 86-028NP).